The sequence spans 131 residues: Jacalin-related lectin 15 (131 aa).

Residues 1–126 (MSTPSGSNPL…LTSLGAYFAP (126 aa)) form the Jacalin-type lectin domain.

Belongs to the jacalin lectin family. Expressed in the vascular and surrounding tissues in cotyledons. Detected in root apical meristems.

In Arabidopsis thaliana (Mouse-ear cress), this protein is Jacalin-related lectin 15 (JAL15).